The primary structure comprises 258 residues: Phosphate import ATP-binding protein PstB (258 aa).

Positions 12 to 253 constitute an ABC transporter domain; sequence LEVKNLNFYY…PARKETEDYI (242 aa). 44–51 is a binding site for ATP; the sequence is GPSGCGKS.

Belongs to the ABC transporter superfamily. Phosphate importer (TC 3.A.1.7) family. As to quaternary structure, the complex is composed of two ATP-binding proteins (PstB), two transmembrane proteins (PstC and PstA) and a solute-binding protein (PstS).

The protein localises to the cell inner membrane. It catalyses the reaction phosphate(out) + ATP + H2O = ADP + 2 phosphate(in) + H(+). Its function is as follows. Part of the ABC transporter complex PstSACB involved in phosphate import. Responsible for energy coupling to the transport system. The polypeptide is Phosphate import ATP-binding protein PstB (Bordetella pertussis (strain Tohama I / ATCC BAA-589 / NCTC 13251)).